Consider the following 173-residue polypeptide: Shikimate kinase (173 aa).

Residue 10 to 15 (GSGKTT) coordinates ATP. Thr-14 provides a ligand contact to Mg(2+). The substrate site is built by Asp-32, Arg-56, and Gly-78. ATP is bound at residue Arg-117. Residue Arg-135 participates in substrate binding.

Belongs to the shikimate kinase family. As to quaternary structure, monomer. It depends on Mg(2+) as a cofactor.

The protein localises to the cytoplasm. It catalyses the reaction shikimate + ATP = 3-phosphoshikimate + ADP + H(+). Its pathway is metabolic intermediate biosynthesis; chorismate biosynthesis; chorismate from D-erythrose 4-phosphate and phosphoenolpyruvate: step 5/7. Its function is as follows. Catalyzes the specific phosphorylation of the 3-hydroxyl group of shikimic acid using ATP as a cosubstrate. The protein is Shikimate kinase of Limosilactobacillus fermentum (strain NBRC 3956 / LMG 18251) (Lactobacillus fermentum).